Consider the following 556-residue polypeptide: Vetispiradiene synthase 1 (556 aa).

5 residues coordinate Mg(2+): aspartate 309, aspartate 313, aspartate 452, threonine 456, and glutamate 460. The DDXXD motif motif lies at 309 to 313 (DDTFD).

Belongs to the terpene synthase family. Tpsa subfamily. It depends on Mg(2+) as a cofactor.

It localises to the cytoplasm. It carries out the reaction (2E,6E)-farnesyl diphosphate = (-)-vetispiradiene + diphosphate. It functions in the pathway secondary metabolite biosynthesis; terpenoid biosynthesis. In terms of biological role, sesquiterpene synthase that catalyzes the formation of vetispiradiene from trans,trans-farnesyl diphosphate. The initial internal cyclization produces the monocyclic intermediate germacrene A. The protein is Vetispiradiene synthase 1 (PVS1) of Solanum tuberosum (Potato).